The chain runs to 243 residues: Isoprenyl transferase 2 (243 aa).

Residue Asp23 is part of the active site. Asp23 serves as a coordination point for Mg(2+). Substrate contacts are provided by residues 24 to 27, Trp28, Arg36, His40, and 68 to 70; these read GNGR and STE. Asn71 (proton acceptor) is an active-site residue. Substrate contacts are provided by residues Trp72, Arg74, Arg191, and 197 to 199; that span reads RTS. A Mg(2+)-binding site is contributed by Glu210.

This sequence belongs to the UPP synthase family. Homodimer. Requires Mg(2+) as cofactor.

Its function is as follows. Catalyzes the condensation of isopentenyl diphosphate (IPP) with allylic pyrophosphates generating different type of terpenoids. The chain is Isoprenyl transferase 2 from Corynebacterium efficiens (strain DSM 44549 / YS-314 / AJ 12310 / JCM 11189 / NBRC 100395).